The primary structure comprises 72 residues: Translation initiation factor IF-1 (72 aa).

One can recognise an S1-like domain in the interval 1 to 72 (MAKDDVIEVD…DKGRITYRHK (72 aa)).

It belongs to the IF-1 family. As to quaternary structure, component of the 30S ribosomal translation pre-initiation complex which assembles on the 30S ribosome in the order IF-2 and IF-3, IF-1 and N-formylmethionyl-tRNA(fMet); mRNA recruitment can occur at any time during PIC assembly.

The protein localises to the cytoplasm. One of the essential components for the initiation of protein synthesis. Stabilizes the binding of IF-2 and IF-3 on the 30S subunit to which N-formylmethionyl-tRNA(fMet) subsequently binds. Helps modulate mRNA selection, yielding the 30S pre-initiation complex (PIC). Upon addition of the 50S ribosomal subunit IF-1, IF-2 and IF-3 are released leaving the mature 70S translation initiation complex. This is Translation initiation factor IF-1 from Helicobacter hepaticus (strain ATCC 51449 / 3B1).